Reading from the N-terminus, the 152-residue chain is Transcriptional repressor NrdR (152 aa).

Residues Cys3 to Cys34 fold into a zinc finger. Positions Leu46–Asp136 constitute an ATP-cone domain.

The protein belongs to the NrdR family. It depends on Zn(2+) as a cofactor.

Functionally, negatively regulates transcription of bacterial ribonucleotide reductase nrd genes and operons by binding to NrdR-boxes. The sequence is that of Transcriptional repressor NrdR from Corynebacterium aurimucosum (strain ATCC 700975 / DSM 44827 / CIP 107346 / CN-1) (Corynebacterium nigricans).